The following is a 345-amino-acid chain: Cytoplasmic envelopment protein 2 (345 aa).

The segment at 26 to 35 (KLVGKSRKHR) is nuclear localization signal 1. The interval 55 to 63 (CILCQLLLF) is nuclear export signal. Residues 90 to 94 (RRRRR) form a nuclear localization signal 2 region.

The protein belongs to the herpesviridae cytoplasmic envelopment protein 2 family. Interacts with cytoplasmic envelopment protein 3 and with the capsid. Interacts with host STING1; this interaction prevents viral DNA-triggered antiviral immune response.

It localises to the virion tegument. The protein resides in the host cytoplasm. Its subcellular location is the host nucleus. Plays a critical role in cytoplasmic virus egress. Participates in the final step of tegumentation and envelope acquisition within the host cytoplasm by directly interacting with the capsid. Upon virion binding to target cell, a signaling cascade is triggered to disrupt the interaction with the capsid, thereby preparing capsid uncoating. Additionally, antagonizes the viral DNA-triggered antiviral immune response by targeting host STING1 and preventing its dimerization and trafficking. The sequence is that of Cytoplasmic envelopment protein 2 (UL94) from Homo sapiens (Human).